The primary structure comprises 65 residues: Large ribosomal subunit protein bL35 (65 aa).

The tract at residues 1–52 (MPKMKSNRAAAKRFKRTANGGFKSGNSFTSHRFHGKTKKQRRQLRGLSMMDK) is disordered. The segment covering 31–44 (HRFHGKTKKQRRQL) has biased composition (basic residues).

The protein belongs to the bacterial ribosomal protein bL35 family.

This chain is Large ribosomal subunit protein bL35, found in Limosilactobacillus reuteri (strain DSM 20016) (Lactobacillus reuteri).